A 325-amino-acid chain; its full sequence is Zinc metalloproteinase/disintegrin (325 aa).

Positions 1–39 are excised as a propeptide; it reads KYENVEKGDEAPKKCGVTHTNLESDEPIEKASQLFGTSE. Gln40 is subject to Pyrrolidone carboxylic acid. Residues 46–242 form the Peptidase M12B domain; it reads RHIELVIVAD…HNPQRILNEP (197 aa). His182 is a binding site for Zn(2+). Glu183 is a catalytic residue. 2 residues coordinate Zn(2+): His186 and His192. 2 disulfide bridges follow: Cys197–Cys221 and Cys199–Cys204. A propeptide spanning residues 243–257 is cleaved from the precursor; it reads LRTDTVSTPVYGNVL. One can recognise a Disintegrin domain in the interval 250 to 322; that stretch reads TPVYGNVLQN…SECESNPWNF (73 aa). Position 258 is a pyrrolidone carboxylic acid (Gln258). 4 disulfide bridges follow: Cys264–Cys287, Cys278–Cys284, Cys283–Cys308, and Cys296–Cys315. Positions 300-302 match the Cell attachment site motif; it reads RGD.

It belongs to the venom metalloproteinase (M12B) family. P-II subfamily. P-IIe sub-subfamily. In terms of assembly, heterodimer of bitisgabonin and gabonin-1 (bitisgabonin-1) or gabonin-2 (bitisgabonin-2); disulfide-linked. It depends on Zn(2+) as a cofactor. Expressed by the venom gland.

It is found in the secreted. Impairs hemostasis in the envenomed animal. Its function is as follows. In dimer with gabonin-1 (bitisgabonin-1), is a potent inhibitor of the adhesion of the RGD-dependent integrin alpha-5/beta-1 (ITGA5/ITGB1) to immobilized fibronectin. Functionally, in dimer with gabonin-2 (bitisgabonin-2), preferentially inhibits the adhesion of the alpha-4/beta-1 (ITGA4/ITGB1) and alpha-9/beta-1 (ITGA9/ITGB1) integrins to VCAM-1 and also acts as a strong antagonist of alpha-5/beta-1 (ITGA5/ITGB1). In Bitis gabonica (Gaboon adder), this protein is Zinc metalloproteinase/disintegrin.